The sequence spans 380 residues: High affinity transport system protein p37 (380 aa).

A signal peptide spans 1–26; that stretch reads MLKRKKLLQGFLKFLPLIIPATIFVS. The N-palmitoyl cysteine moiety is linked to residue Cys27. Cys27 carries S-diacylglycerol cysteine lipidation. Residues 285 to 304 form a disordered region; that stretch reads NHFYTPTENNGKGDSEKSNN.

The protein resides in the cell membrane. Functionally, P37 is part of a high-affinity transport system. The chain is High affinity transport system protein p37 (p37) from Mycoplasma pneumoniae (strain ATCC 29342 / M129 / Subtype 1) (Mycoplasmoides pneumoniae).